Reading from the N-terminus, the 149-residue chain is Transcriptional repressor NrdR (149 aa).

Residues 3-34 (CPFCGHLETQVVETRISEDAEFIRRRRQCGAC) fold into a zinc finger. Residues 49–139 (PSIVKKDGRR…VYRSFEDIDE (91 aa)) form the ATP-cone domain.

The protein belongs to the NrdR family. Requires Zn(2+) as cofactor.

Its function is as follows. Negatively regulates transcription of bacterial ribonucleotide reductase nrd genes and operons by binding to NrdR-boxes. The polypeptide is Transcriptional repressor NrdR (Polaromonas naphthalenivorans (strain CJ2)).